A 224-amino-acid polypeptide reads, in one-letter code: Oocyte zinc finger protein XlCOF6.1 (224 aa).

8 C2H2-type zinc fingers span residues F6 to H28, F34 to H56, F62 to H84, F90 to H112, F118 to H140, F146 to H168, F174 to H196, and F202 to H224.

Belongs to the krueppel C2H2-type zinc-finger protein family.

It localises to the nucleus. In terms of biological role, may be involved in transcriptional regulation. This is Oocyte zinc finger protein XlCOF6.1 from Xenopus laevis (African clawed frog).